We begin with the raw amino-acid sequence, 237 residues long: Ras-related protein RABA3 (237 aa).

35–42 (GDSAVGKT) is a GTP binding site. The Effector region signature appears at 57 to 65 (SKSTIGVEF). GTP contacts are provided by residues 83-87 (DTAGQ), 141-144 (NKAD), and 172-173 (SA). 2 S-geranylgeranyl cysteine lipidation sites follow: Cys-235 and Cys-237. Cysteine methyl ester is present on Cys-237.

This sequence belongs to the small GTPase superfamily. Rab family. In terms of tissue distribution, expressed in root tips.

The protein resides in the endosome membrane. It is found in the golgi apparatus. The protein localises to the trans-Golgi network membrane. Functionally, intracellular vesicle trafficking and protein transport. This Arabidopsis thaliana (Mouse-ear cress) protein is Ras-related protein RABA3 (RABA3).